Reading from the N-terminus, the 114-residue chain is UPF0212 protein Mbur_0968 (114 aa).

This sequence belongs to the UPF0212 family.

This is UPF0212 protein Mbur_0968 from Methanococcoides burtonii (strain DSM 6242 / NBRC 107633 / OCM 468 / ACE-M).